A 282-amino-acid chain; its full sequence is NADPH-dependent 7-cyano-7-deazaguanine reductase (282 aa).

Residue 88–90 (IES) coordinates substrate. 90-91 (SK) contacts NADPH. Catalysis depends on Cys-190, which acts as the Thioimide intermediate. Asp-197 acts as the Proton donor in catalysis. Position 229–230 (229–230 (HE)) interacts with substrate. Residue 258–259 (RG) participates in NADPH binding.

This sequence belongs to the GTP cyclohydrolase I family. QueF type 2 subfamily. As to quaternary structure, homodimer.

The protein localises to the cytoplasm. The catalysed reaction is 7-aminomethyl-7-carbaguanine + 2 NADP(+) = 7-cyano-7-deazaguanine + 2 NADPH + 3 H(+). It functions in the pathway tRNA modification; tRNA-queuosine biosynthesis. In terms of biological role, catalyzes the NADPH-dependent reduction of 7-cyano-7-deazaguanine (preQ0) to 7-aminomethyl-7-deazaguanine (preQ1). The protein is NADPH-dependent 7-cyano-7-deazaguanine reductase of Escherichia coli O9:H4 (strain HS).